The chain runs to 365 residues: Peptide chain release factor 2 (365 aa).

Gln-252 carries the N5-methylglutamine modification.

The protein belongs to the prokaryotic/mitochondrial release factor family. Methylated by PrmC. Methylation increases the termination efficiency of RF2.

The protein resides in the cytoplasm. Peptide chain release factor 2 directs the termination of translation in response to the peptide chain termination codons UGA and UAA. The protein is Peptide chain release factor 2 of Proteus mirabilis (strain HI4320).